The chain runs to 255 residues: Dehydrogenase/reductase SDR family member 11 (255 aa).

The signal sequence occupies residues 1 to 25; the sequence is MERWRDRLALVTGASGGIGAAVARA. NADP(+)-binding positions include 13-18, 38-39, glutamate 44, 65-66, and asparagine 92; these read GASGGI, RT, and DL. Substrate is bound by residues serine 146 and tyrosine 161. NADP(+)-binding positions include tyrosine 161, lysine 165, 196 to 199, and lysine 203; that span reads VETQ. Tyrosine 161 functions as the Proton acceptor in the catalytic mechanism.

It belongs to the short-chain dehydrogenases/reductases (SDR) family.

It is found in the secreted. It catalyses the reaction a 3beta-hydroxysteroid + NADP(+) = a 3-oxosteroid + NADPH + H(+). The enzyme catalyses 17beta-estradiol + NAD(+) = estrone + NADH + H(+). The catalysed reaction is 17beta-estradiol + NADP(+) = estrone + NADPH + H(+). It functions in the pathway steroid biosynthesis; estrogen biosynthesis. Inhibited by flavonoids including apigenin, luteolin, genistein, kaempferol and quercetin and also by carbenoxolone, zearalenone, glycyrrhetinic, curcumin and flufenamic acid. Functionally, catalyzes the conversion of the 17-keto group of estrone, 4- and 5-androstenes and 5-alpha-androstanes into their 17-beta-hydroxyl metabolites and the conversion of the 3-keto group of 3-, 3,17- and 3,20- diketosteroids into their 3-hydroxyl metabolites. Exhibits reductive 3-beta-hydroxysteroid dehydrogenase activity toward 5-beta-androstanes, 5-beta-pregnanes, 4-pregnenes and bile acids. May also reduce endogenous and exogenous alpha-dicarbonyl compounds and xenobiotic alicyclic ketones. The chain is Dehydrogenase/reductase SDR family member 11 (DHRS11) from Bos taurus (Bovine).